Here is a 159-residue protein sequence, read N- to C-terminus: Ribosomal RNA large subunit methyltransferase H (159 aa).

Residues leucine 76, glycine 108, and 127-132 (FGLLTL) contribute to the S-adenosyl-L-methionine site.

It belongs to the RNA methyltransferase RlmH family. Homodimer.

Its subcellular location is the cytoplasm. The enzyme catalyses pseudouridine(1915) in 23S rRNA + S-adenosyl-L-methionine = N(3)-methylpseudouridine(1915) in 23S rRNA + S-adenosyl-L-homocysteine + H(+). Specifically methylates the pseudouridine at position 1915 (m3Psi1915) in 23S rRNA. This Streptococcus equi subsp. zooepidemicus (strain H70) protein is Ribosomal RNA large subunit methyltransferase H.